The following is a 138-amino-acid chain: Phosphoribosyl-AMP cyclohydrolase (138 aa).

A Mg(2+)-binding site is contributed by Asp84. Zn(2+) is bound at residue Cys85. Mg(2+)-binding residues include Asp86 and Asp88. Zn(2+) contacts are provided by Cys102 and Cys109.

This sequence belongs to the PRA-CH family. Homodimer. Requires Mg(2+) as cofactor. Zn(2+) is required as a cofactor.

It localises to the cytoplasm. It catalyses the reaction 1-(5-phospho-beta-D-ribosyl)-5'-AMP + H2O = 1-(5-phospho-beta-D-ribosyl)-5-[(5-phospho-beta-D-ribosylamino)methylideneamino]imidazole-4-carboxamide. The protein operates within amino-acid biosynthesis; L-histidine biosynthesis; L-histidine from 5-phospho-alpha-D-ribose 1-diphosphate: step 3/9. Its function is as follows. Catalyzes the hydrolysis of the adenine ring of phosphoribosyl-AMP. This chain is Phosphoribosyl-AMP cyclohydrolase, found in Burkholderia lata (strain ATCC 17760 / DSM 23089 / LMG 22485 / NCIMB 9086 / R18194 / 383).